We begin with the raw amino-acid sequence, 671 residues long: DNA ligase (671 aa).

Residues 32–36 (DAEYD), 81–82 (SL), and Glu-113 contribute to the NAD(+) site. The active-site N6-AMP-lysine intermediate is Lys-115. 4 residues coordinate NAD(+): Arg-136, Glu-173, Lys-290, and Lys-314. 4 residues coordinate Zn(2+): Cys-408, Cys-411, Cys-426, and Cys-432. Residues 593 to 671 (EIDSPFAGKT…EAEMLRLLGS (79 aa)) form the BRCT domain.

Belongs to the NAD-dependent DNA ligase family. LigA subfamily. The cofactor is Mg(2+). Mn(2+) is required as a cofactor.

The catalysed reaction is NAD(+) + (deoxyribonucleotide)n-3'-hydroxyl + 5'-phospho-(deoxyribonucleotide)m = (deoxyribonucleotide)n+m + AMP + beta-nicotinamide D-nucleotide.. Its function is as follows. DNA ligase that catalyzes the formation of phosphodiester linkages between 5'-phosphoryl and 3'-hydroxyl groups in double-stranded DNA using NAD as a coenzyme and as the energy source for the reaction. It is essential for DNA replication and repair of damaged DNA. The polypeptide is DNA ligase (Shigella sonnei (strain Ss046)).